The primary structure comprises 231 residues: Peroxisomal membrane protein 11E (231 aa).

Residues 1–91 (MTTLDLTRAE…LPLVLLGKSK (91 aa)) are Cytoplasmic-facing. The helical transmembrane segment at 92-108 (NALLSTFLFLDQIVWLG) threads the bilayer. Residues 109 to 202 (RSGIYKNKER…LLQLAPKTIS (94 aa)) lie on the Lumenal side of the membrane. Residues 203–222 (PRVTGAFGFTTSLISCYQLL) traverse the membrane as a helical segment. Over 223-231 (PSRPKLKTP) the chain is Cytoplasmic.

It belongs to the peroxin-11 family. In terms of assembly, homooligomer. Interacts with ARC5 and FIS1B on peroxisomes. In terms of tissue distribution, expressed in leaves and developing siliques.

The protein resides in the peroxisome membrane. Functionally, involved in peroxisomal proliferation. Promotes peroxisomal duplication, aggregation or elongation without fission. The polypeptide is Peroxisomal membrane protein 11E (PEX11E) (Arabidopsis thaliana (Mouse-ear cress)).